The sequence spans 634 residues: Nicotinic receptor-associated protein 1 (634 aa).

2 consecutive C2 domains span residues 1–141 (MNQP…KAHL) and 159–295 (KTGS…EILL). Ca(2+) contacts are provided by leucine 29, aspartate 30, aspartate 36, aspartate 105, aspartate 107, aspartate 119, aspartate 189, aspartate 195, aspartate 251, aspartate 253, and aspartate 271. The VWFA domain occupies 338-557 (DFAVAVDFTA…LDPDVIQENL (220 aa)). Residues 576–603 (RGFQPRPVDDPWRRDSPPPEFDPILDGT) form a disordered region. Over residues 582-592 (PVDDPWRRDSP) the composition is skewed to basic and acidic residues.

The protein belongs to the copine family. Interacts with nicotinic acetylcholine receptor. It depends on Ca(2+) as a cofactor. As to expression, expressed in head and tail neurons, ventral cord moto-neurons, body wall muscles and hypodermal cells of the vulva.

The protein localises to the cell membrane. Its function is as follows. Exhibits calcium-dependent phospholipid binding properties. May function in membrane trafficking. Regulates synaptic levels of nicotinic acetylcholine receptor subunit lev-1 and unc-38 in the nerve cord. Involved in nicotinic acetylcholine receptor (nAChR)-mediated sensitivity to nicotine and levamisole. Affects directional sperm motility. The protein is Nicotinic receptor-associated protein 1 (nra-1) of Caenorhabditis elegans.